Consider the following 138-residue polypeptide: Cysteine desulfuration protein SufE (138 aa).

C51 serves as the catalytic Cysteine persulfide intermediate.

Belongs to the SufE family. As to quaternary structure, homodimer. Interacts with SufS.

The protein resides in the cytoplasm. The protein operates within cofactor biosynthesis; iron-sulfur cluster biosynthesis. Participates in cysteine desulfuration mediated by SufS. Cysteine desulfuration mobilizes sulfur from L-cysteine to yield L-alanine and constitutes an essential step in sulfur metabolism for biosynthesis of a variety of sulfur-containing biomolecules. Functions as a sulfur acceptor for SufS, by mediating the direct transfer of the sulfur atom from the S-sulfanylcysteine of SufS, an intermediate product of cysteine desulfuration process. This is Cysteine desulfuration protein SufE from Klebsiella pneumoniae (strain 342).